The primary structure comprises 119 residues: Large ribosomal subunit protein uL18 (119 aa).

Belongs to the universal ribosomal protein uL18 family. In terms of assembly, part of the 50S ribosomal subunit; part of the 5S rRNA/L5/L18/L25 subcomplex. Contacts the 5S and 23S rRNAs.

Functionally, this is one of the proteins that bind and probably mediate the attachment of the 5S RNA into the large ribosomal subunit, where it forms part of the central protuberance. This Chlorobaculum tepidum (strain ATCC 49652 / DSM 12025 / NBRC 103806 / TLS) (Chlorobium tepidum) protein is Large ribosomal subunit protein uL18.